The chain runs to 63 residues: UPF0512 protein X (63 aa).

The protein belongs to the UPF0512 family.

The sequence is that of UPF0512 protein X from Dictyostelium discoideum (Social amoeba).